The following is a 582-amino-acid chain: Phosphoglucomutase, cytoplasmic (582 aa).

The alpha-D-glucose 1,6-bisphosphate site is built by Arg-25 and Ser-124. Ser-124 acts as the Phosphoserine intermediate in catalysis. Mg(2+) is bound by residues Ser-124, Asp-300, Asp-302, and Asp-304. Ser-124 bears the Phosphoserine mark. The alpha-D-glucose 1,6-bisphosphate site is built by Asp-304, Arg-305, Thr-368, Glu-387, Ser-389, and Lys-400.

Belongs to the phosphohexose mutase family. As to quaternary structure, monomer. Mg(2+) is required as a cofactor.

Its subcellular location is the cytoplasm. The enzyme catalyses alpha-D-glucose 1-phosphate = alpha-D-glucose 6-phosphate. The catalysed reaction is O-phospho-L-seryl-[protein] + alpha-D-glucose 1-phosphate = alpha-D-glucose 1,6-bisphosphate + L-seryl-[protein]. It carries out the reaction alpha-D-glucose 1,6-bisphosphate + L-seryl-[protein] = O-phospho-L-seryl-[protein] + alpha-D-glucose 6-phosphate. Functionally, catalyzes the reversible isomerization of alpha-D-glucose 1-phosphate to alpha-D-glucose 6-phosphate. The mechanism proceeds via the intermediate compound alpha-D-glucose 1,6-bisphosphate. This enzyme participates in both the breakdown and synthesis of glucose. The sequence is that of Phosphoglucomutase, cytoplasmic (PGM1) from Pisum sativum (Garden pea).